The primary structure comprises 123 residues: Large ribosomal subunit protein uL22c (123 aa).

The protein belongs to the universal ribosomal protein uL22 family. As to quaternary structure, part of the 50S ribosomal subunit.

It is found in the plastid. It localises to the chloroplast. Functionally, this protein binds specifically to 23S rRNA. Its function is as follows. The globular domain of the protein is located near the polypeptide exit tunnel on the outside of the subunit, while an extended beta-hairpin is found that lines the wall of the exit tunnel in the center of the 70S ribosome. The protein is Large ribosomal subunit protein uL22c (rpl22) of Illicium oligandrum (Star anise).